The following is a 246-amino-acid chain: Probable transcriptional regulatory protein COSY_0365 (246 aa).

It belongs to the TACO1 family.

The protein localises to the cytoplasm. This chain is Probable transcriptional regulatory protein COSY_0365, found in Vesicomyosocius okutanii subsp. Calyptogena okutanii (strain HA).